A 54-amino-acid chain; its full sequence is Ovomucoid (54 aa).

The 51-residue stretch at 4-54 folds into the Kazal-like domain; the sequence is VDCSDYPRPVCTLDYMPLCGSDNKTYSNKCNFCNAVVDSNGTITLSHFGRC. Cystine bridges form between C6–C36, C14–C33, and C22–C54. N43 is a glycosylation site (N-linked (GlcNAc...) asparagine).

It localises to the secreted. The polypeptide is Ovomucoid (Corvus albus (Pied crow)).